Here is a 556-residue protein sequence, read N- to C-terminus: MSPFLKFFLFLYDYLSPSSFFLVQRNTLGASLDTTDGVVRSGIIGEIIYIWKQTRIFVFIPILKCLVTICLVMSLLLFIERVYMSIVVVFVKLLRRTPEKVHKWEPINDDDLELANTNYPMVLIQIPMYNEKEVCQLSIGAACRLSWPLDRMIVQVLDDSTDPASKELVNAECDKWARKGINIMSEIRDNRIGYKAGALKAGMMHNYVKQCEFVAIFDADFQPDPDFLERTIPFLIHNHEISLVQCRWKFVNANECLMTRMQEMSLNYHFVAEQESGSSIHAFFGFNGTAGVWRIAALNEAGGWKDRTTVEDMDLAVRACLHGWKFVYVHDVEVKNELPSTFKAYRFQQHRWSCGPANLWRKMTMEILQNKKVSAWKKLYLIYNFFFIRKIVVHIFTFVFYCLILPTTVLFPELQVPKWATVYFPTTITILNAIATPRSLHLLVFWILFENVMSMHRTKATFIGLLEAGRVNEWVVTEKLGDTLKSKLIGKATTKLYTRFGQRLNWRELVVGLYIFFCGCYDFAYGGSYFYVYLFLQSCAFFVAGVGYIGTFVPTV.

A helical transmembrane segment spans residues 56 to 76; it reads IFVFIPILKCLVTICLVMSLL. Aspartate 159 is an active-site residue. Positions 218 and 220 each coordinate substrate. Aspartate 312 is a catalytic residue. The next 4 helical transmembrane spans lie at 391 to 411, 428 to 448, 509 to 529, and 530 to 550; these read IVVH…TVLF, ITIL…FWIL, LVVG…GGSY, and FYVY…GYIG.

The protein belongs to the glycosyltransferase 2 family. Plant cellulose synthase-like A subfamily.

It is found in the golgi apparatus membrane. It catalyses the reaction GDP-mannose + (glucomannan)n = GDP + (glucomannan)n+1.. In terms of biological role, probable mannan synthase which consists of a 4-beta-mannosyltransferase activity on mannan using GDP-mannose. The beta-1,4-mannan product is the backbone for galactomannan synthesis by galactomannan galactosyltransferase. Galactomannan is a noncellulosic polysaccharides of plant cell wall. This is Probable glucomannan 4-beta-mannosyltransferase 3 from Arabidopsis thaliana (Mouse-ear cress).